The sequence spans 170 residues: Zinc finger matrin-type protein 5 (170 aa).

A C3H1-type zinc finger spans residues 51–79; sequence EQNKRPCRKFLLTGQCDFGSNCRFSHMSE. Residues 150–170 form a disordered region; it reads PPSLRAPPPGGWPLQPRVQWG.

As to quaternary structure, component of the U11/U12 snRNPs that are part of the U12-type spliceosome. Not found in the major spliceosome.

The protein resides in the nucleus. This chain is Zinc finger matrin-type protein 5 (ZMAT5), found in Homo sapiens (Human).